Here is a 293-residue protein sequence, read N- to C-terminus: Probable porphobilinogen deaminase (293 aa).

The residue at position 233 (Cys233) is an S-(dipyrrolylmethanemethyl)cysteine.

This sequence belongs to the HMBS family. The cofactor is dipyrromethane.

It catalyses the reaction 4 porphobilinogen + H2O = hydroxymethylbilane + 4 NH4(+). The protein operates within porphyrin-containing compound metabolism; protoporphyrin-IX biosynthesis; coproporphyrinogen-III from 5-aminolevulinate: step 2/4. Tetrapolymerization of the monopyrrole PBG into the hydroxymethylbilane pre-uroporphyrinogen in several discrete steps. The polypeptide is Probable porphobilinogen deaminase (Saccharolobus islandicus (strain Y.N.15.51 / Yellowstone #2) (Sulfolobus islandicus)).